The chain runs to 235 residues: Orotidine 5'-phosphate decarboxylase (235 aa).

Residues aspartate 10, lysine 33, 60–69 (DLKMSDIPNT), threonine 123, arginine 185, glutamine 194, glycine 214, and arginine 215 each bind substrate. Lysine 62 serves as the catalytic Proton donor.

This sequence belongs to the OMP decarboxylase family. Type 1 subfamily. Homodimer.

It catalyses the reaction orotidine 5'-phosphate + H(+) = UMP + CO2. It functions in the pathway pyrimidine metabolism; UMP biosynthesis via de novo pathway; UMP from orotate: step 2/2. Catalyzes the decarboxylation of orotidine 5'-monophosphate (OMP) to uridine 5'-monophosphate (UMP). This chain is Orotidine 5'-phosphate decarboxylase, found in Lactobacillus gasseri (strain ATCC 33323 / DSM 20243 / BCRC 14619 / CIP 102991 / JCM 1131 / KCTC 3163 / NCIMB 11718 / NCTC 13722 / AM63).